The following is a 642-amino-acid chain: Threonine--tRNA ligase (642 aa).

Positions 1–61 constitute a TGS domain; it reads MPIITLPDGS…EEDASLEIIT (61 aa). Residues 244-535 are catalytic; that stretch reads DHRKIGKQLD…LIEEYAGFFP (292 aa). Residues Cys335, His386, and His512 each contribute to the Zn(2+) site.

This sequence belongs to the class-II aminoacyl-tRNA synthetase family. In terms of assembly, homodimer. Zn(2+) serves as cofactor.

The protein resides in the cytoplasm. It catalyses the reaction tRNA(Thr) + L-threonine + ATP = L-threonyl-tRNA(Thr) + AMP + diphosphate + H(+). In terms of biological role, catalyzes the attachment of threonine to tRNA(Thr) in a two-step reaction: L-threonine is first activated by ATP to form Thr-AMP and then transferred to the acceptor end of tRNA(Thr). Also edits incorrectly charged L-seryl-tRNA(Thr). In Vibrio vulnificus (strain YJ016), this protein is Threonine--tRNA ligase.